The primary structure comprises 239 residues: Ribosomal RNA small subunit methyltransferase G (239 aa).

S-adenosyl-L-methionine contacts are provided by residues G78, F83, 129–130 (AE), and R148.

It belongs to the methyltransferase superfamily. RNA methyltransferase RsmG family.

It localises to the cytoplasm. Functionally, specifically methylates the N7 position of a guanine in 16S rRNA. This chain is Ribosomal RNA small subunit methyltransferase G, found in Alkaliphilus metalliredigens (strain QYMF).